Consider the following 139-residue polypeptide: Putative pre-16S rRNA nuclease (139 aa).

This sequence belongs to the YqgF nuclease family.

Its subcellular location is the cytoplasm. Could be a nuclease involved in processing of the 5'-end of pre-16S rRNA. The sequence is that of Putative pre-16S rRNA nuclease from Streptococcus mutans serotype c (strain ATCC 700610 / UA159).